We begin with the raw amino-acid sequence, 834 residues long: Copper-exporting P-type ATPase (834 aa).

2 HMA domains span residues 3 to 64 and 99 to 162; these read QTID…YDAS and DSQQ…YGAE. Cu(+) contacts are provided by cysteine 14, cysteine 17, cysteine 110, and cysteine 113. The next 6 helical transmembrane spans lie at 187 to 207, 218 to 238, 254 to 274, 284 to 304, 438 to 458, and 464 to 484; these read WQAI…MIGD, LWLV…GHFY, TLVA…NLWP, LYYE…MLEA, AVFV…WYFF, and IVYT…CALG. Aspartate 523 (4-aspartylphosphate intermediate) is an active-site residue. 2 residues coordinate Mg(2+): aspartate 720 and aspartate 724. 2 helical membrane passes run 779–799 and 801–821; these read LGAF…LWPF and GTLL…ITVV.

Belongs to the cation transport ATPase (P-type) (TC 3.A.3) family. Type IB subfamily.

The protein localises to the cell inner membrane. Its subcellular location is the cytoplasm. It catalyses the reaction Cu(+)(in) + ATP + H2O = Cu(+)(out) + ADP + phosphate + H(+). Functionally, involved in Cu(+) export. Probably also encodes a cytoplasmic copper chaperone CopA(Z) that is produced by programmed ribosomal frameshifting. This Escherichia coli O157:H7 protein is Copper-exporting P-type ATPase (copA).